Here is a 332-residue protein sequence, read N- to C-terminus: MAVFTAVSDSDLAQWMRHYELGDVLAFRGIPSGIENSNFFLTTTRGEYVLTIFEKLTAEQLPFYLDLMSHLAGHGVPVPDPIPRDDGALFGMLHGKPAAIVTKLDGSAELAPGVEHCIEVGQMLARLHLAGRDYPRNQPNLRSLPWWQENVPAIVPFITDEQRALLEGELVHQAGFFASDDYAALPAGPCHCDLFRDNVLFAHAAPDTGHDVRLGGFFDFYFAGCDKWLFDVAVTVNDWCVDLATGVLDVARADALLRAYQTVRPFTAEERRHWSDMLRAGAYRFWVSRLYDFYLPRAAEMLKPHDPGHFERILRERIAHTPALPEIQTACN.

It belongs to the pseudomonas-type ThrB family.

The enzyme catalyses L-homoserine + ATP = O-phospho-L-homoserine + ADP + H(+). Its pathway is amino-acid biosynthesis; L-threonine biosynthesis; L-threonine from L-aspartate: step 4/5. The protein is Homoserine kinase of Burkholderia lata (strain ATCC 17760 / DSM 23089 / LMG 22485 / NCIMB 9086 / R18194 / 383).